A 489-amino-acid chain; its full sequence is Protein nucleotidyltransferase YdiU (489 aa).

ATP is bound by residues Gly-88, Gly-90, Arg-91, Lys-111, Asp-123, Gly-124, Arg-174, and Arg-181. Residue Asp-250 is the Proton acceptor of the active site. Mg(2+)-binding residues include Asn-251 and Asp-260. Asp-260 serves as a coordination point for ATP.

It belongs to the SELO family. Requires Mg(2+) as cofactor. The cofactor is Mn(2+).

The catalysed reaction is L-seryl-[protein] + ATP = 3-O-(5'-adenylyl)-L-seryl-[protein] + diphosphate. It carries out the reaction L-threonyl-[protein] + ATP = 3-O-(5'-adenylyl)-L-threonyl-[protein] + diphosphate. The enzyme catalyses L-tyrosyl-[protein] + ATP = O-(5'-adenylyl)-L-tyrosyl-[protein] + diphosphate. It catalyses the reaction L-histidyl-[protein] + UTP = N(tele)-(5'-uridylyl)-L-histidyl-[protein] + diphosphate. The catalysed reaction is L-seryl-[protein] + UTP = O-(5'-uridylyl)-L-seryl-[protein] + diphosphate. It carries out the reaction L-tyrosyl-[protein] + UTP = O-(5'-uridylyl)-L-tyrosyl-[protein] + diphosphate. Functionally, nucleotidyltransferase involved in the post-translational modification of proteins. It can catalyze the addition of adenosine monophosphate (AMP) or uridine monophosphate (UMP) to a protein, resulting in modifications known as AMPylation and UMPylation. This chain is Protein nucleotidyltransferase YdiU, found in Vibrio parahaemolyticus serotype O3:K6 (strain RIMD 2210633).